The primary structure comprises 344 residues: Aromatic amino acid aminotransferase (344 aa).

Lys-213 carries the N6-(pyridoxal phosphate)lysine modification.

It belongs to the class-II pyridoxal-phosphate-dependent aminotransferase family. In terms of assembly, homodimer. Pyridoxal 5'-phosphate is required as a cofactor.

It carries out the reaction an aromatic L-alpha-amino acid + 2-oxoglutarate = an aromatic oxo-acid + L-glutamate. Its function is as follows. Aminotransferase that catalyzes the conversion of aromatic amino acids and 2-oxoglutarate into corresponding aromatic oxo acids and L-glutamate. This Corynebacterium diphtheriae (strain ATCC 700971 / NCTC 13129 / Biotype gravis) protein is Aromatic amino acid aminotransferase.